A 341-amino-acid polypeptide reads, in one-letter code: MAIQEELEATKQQFCAELSQVNSSKDLFDLKVRYLGKKGLFRCFADKLRECPADQKALMGASINDCKTYIENLIRDKNHAILLAEEAAEFLREKIDITLPGEPHCPGGKHIVKKVLDDVVDIFVHLGFCVREAPNIESEENNFSLLNFEEDHPARQMHDTFYLDPKTVLRTHTSNVQVRELRKGQPPIKVVAPGLCFRNEDISARSHVIFHQVEAFYLDRYVTLSDLTAMLTEFYHTFFEREIELRLRHSYFPFVEPGIEVDVSCECRQAGCSLCKHTGWLEVAGAGMIHPQVLRNSGFDPEIYTGYAVGMGIERLAMLQHGISDIRLFCENDLRFLQQFS.

Residue Glu-256 participates in Mg(2+) binding.

This sequence belongs to the class-II aminoacyl-tRNA synthetase family. Phe-tRNA synthetase alpha subunit type 1 subfamily. As to quaternary structure, tetramer of two alpha and two beta subunits. The cofactor is Mg(2+).

The protein localises to the cytoplasm. The enzyme catalyses tRNA(Phe) + L-phenylalanine + ATP = L-phenylalanyl-tRNA(Phe) + AMP + diphosphate + H(+). In Chlamydia abortus (strain DSM 27085 / S26/3) (Chlamydophila abortus), this protein is Phenylalanine--tRNA ligase alpha subunit.